The sequence spans 201 residues: ATP-dependent Clp protease proteolytic subunit (201 aa).

S98 acts as the Nucleophile in catalysis. H123 is a catalytic residue.

It belongs to the peptidase S14 family. As to quaternary structure, fourteen ClpP subunits assemble into 2 heptameric rings which stack back to back to give a disk-like structure with a central cavity, resembling the structure of eukaryotic proteasomes.

Its subcellular location is the cytoplasm. The enzyme catalyses Hydrolysis of proteins to small peptides in the presence of ATP and magnesium. alpha-casein is the usual test substrate. In the absence of ATP, only oligopeptides shorter than five residues are hydrolyzed (such as succinyl-Leu-Tyr-|-NHMec, and Leu-Tyr-Leu-|-Tyr-Trp, in which cleavage of the -Tyr-|-Leu- and -Tyr-|-Trp bonds also occurs).. Cleaves peptides in various proteins in a process that requires ATP hydrolysis. Has a chymotrypsin-like activity. Plays a major role in the degradation of misfolded proteins. This chain is ATP-dependent Clp protease proteolytic subunit, found in Rickettsia typhi (strain ATCC VR-144 / Wilmington).